The following is a 243-amino-acid chain: DNA repair protein RecO (243 aa).

The protein belongs to the RecO family.

In terms of biological role, involved in DNA repair and RecF pathway recombination. The protein is DNA repair protein RecO of Vibrio vulnificus (strain CMCP6).